The primary structure comprises 364 residues: MAEVPPGPSSLLPPPAPAAPAAAELRCPFPAGAALACCSEDEEDDEEHEGGCGSPAGGEAATSAKARSCLRCPQLPPEQQQQQLNGLIGPELRHLRAAATLKSKVLSAAEAAAPDGASKVTATKGAEGHPGERPPHSVPNNARTALPGRSEAAAAAAGAASDPAAARNGLVEGTEQQEEEEMDEQVRLLSSSLTTGCSLRSSQGREAEPGEDRTIRYVRYESELQMPDIMRLITKDLSEPYSIYTYRYFIHNWPQLCFLAMVGEECVGAIVCKLDMHKKMFRRGYIAMLAVDSKYRRNGIGTNLVKKAIYAMVEGDCDEVVLETEITNKSALKLYENLGFVRDKRLFRYYLNGVDALRLKLWLR.

The segment covering 1 to 18 has biased composition (pro residues); the sequence is MAEVPPGPSSLLPPPAPA. 3 disordered regions span residues 1–21, 39–65, and 110–164; these read MAEV…AAPA, SEDE…TSAK, and EAAA…SDPA. Residues Ser39 and Ser54 each carry the phosphoserine modification. A compositionally biased stretch (acidic residues) spans 39–48; it reads SEDEEDDEEH. Residues 126 to 135 are compositionally biased toward basic and acidic residues; the sequence is AEGHPGERPP. Residues 152 to 164 are compositionally biased toward low complexity; that stretch reads AAAAAAGAASDPA. Phosphoserine occurs at positions 192, 198, and 201. The N-acetyltransferase domain maps to 216–364; the sequence is RYVRYESELQ…DALRLKLWLR (149 aa). Lys235 carries the post-translational modification N6-acetyllysine.

This sequence belongs to the acetyltransferase family. MAK3 subfamily. In terms of assembly, component of the N-terminal acetyltransferase C (NatC) complex, which is composed of NAA35, NAA38 and NAA30.

Its subcellular location is the cytoplasm. The protein resides in the nucleus. The catalysed reaction is N-terminal L-methionyl-L-leucyl-[protein] + acetyl-CoA = N-terminal N(alpha)-acetyl-L-methionyl-L-leucyl-[protein] + CoA + H(+). It catalyses the reaction N-terminal L-methionyl-L-isoleucyl-[protein] + acetyl-CoA = N-terminal N(alpha)-acetyl-L-methionyl-L-isoleucyl-[protein] + CoA + H(+). It carries out the reaction N-terminal L-methionyl-L-phenylalanyl-[protein] + acetyl-CoA = N-terminal N(alpha)-acetyl-L-methionyl-L-phenylalanyl-[protein] + CoA + H(+). The enzyme catalyses N-terminal L-methionyl-L-tryptophyl-[protein] + acetyl-CoA = N-terminal N(alpha)-acetyl-L-methionyl-L-tryptophyl-[protein] + CoA + H(+). The catalysed reaction is N-terminal L-methionyl-L-tyrosyl-[protein] + acetyl-CoA = N-terminal N(alpha)-acetyl-L-methionyl-L-tyrosyl-[protein] + CoA + H(+). Its function is as follows. Catalytic subunit of the N-terminal acetyltransferase C (NatC) complex. Catalyzes acetylation of the N-terminal methionine residues of peptides beginning with Met-Leu-Ala and Met-Leu-Gly. N-terminal acetylation protects proteins from ubiquitination and degradation by the N-end rule pathway. Necessary for the lysosomal localization and function of ARL8B sugeesting that ARL8B is a NatC substrate. The sequence is that of N-alpha-acetyltransferase 30 (Naa30) from Mus musculus (Mouse).